A 566-amino-acid polypeptide reads, in one-letter code: Putative sulfite reductase [NADPH] hemoprotein beta-component (566 aa).

Residues cysteine 430, cysteine 436, cysteine 475, and cysteine 479 each contribute to the [4Fe-4S] cluster site. Position 479 (cysteine 479) interacts with siroheme.

This sequence belongs to the nitrite and sulfite reductase 4Fe-4S domain family. In terms of assembly, alpha(8)-beta(8). The alpha component is a flavoprotein, the beta component is a hemoprotein. Siroheme serves as cofactor. The cofactor is [4Fe-4S] cluster.

It carries out the reaction hydrogen sulfide + 3 NADP(+) + 3 H2O = sulfite + 3 NADPH + 4 H(+). Its pathway is sulfur metabolism; hydrogen sulfide biosynthesis; hydrogen sulfide from sulfite (NADPH route): step 1/1. Component of the sulfite reductase complex that catalyzes the 6-electron reduction of sulfite to sulfide. This is one of several activities required for the biosynthesis of L-cysteine from sulfate. In Buchnera aphidicola subsp. Schizaphis graminum (strain Sg), this protein is Putative sulfite reductase [NADPH] hemoprotein beta-component.